The chain runs to 61 residues: Large ribosomal subunit protein uL30 (61 aa).

Belongs to the universal ribosomal protein uL30 family. In terms of assembly, part of the 50S ribosomal subunit.

This is Large ribosomal subunit protein uL30 from Bordetella avium (strain 197N).